The sequence spans 173 residues: Alpha-crystallin A chain (173 aa).

Residue Met1 is modified to N-acetylmethionine. The tract at residues 1–63 (MDVTIQHPWF…RTVLDSGVSE (63 aa)) is required for complex formation with BFSP1 and BFSP2. Deamidated glutamine; partial is present on Gln6. Ser45 is subject to Phosphoserine. Deamidated glutamine; partial is present on Gln50. Positions 52–162 (LFRTVLDSGV…GHSERAIPVS (111 aa)) constitute a sHSP domain. Lys70 carries the post-translational modification N6-acetyllysine. Gln90 is modified (deamidated glutamine; partial). Lys99 bears the N6-acetyllysine mark. Residue His100 participates in Zn(2+) binding. Asn101 bears the Deamidated asparagine; partial mark. Glu102 and His107 together coordinate Zn(2+). Phosphoserine is present on Ser122. Asn123 is modified (deamidated asparagine; partial). The segment at 144–173 (PKVQSGLDAGHSERAIPVSREEKPSSAPSS) is disordered. Gln147 is subject to Deamidated glutamine; partial. Basic and acidic residues predominate over residues 153–167 (GHSERAIPVSREEKP). His154 is a binding site for Zn(2+). Ser162 carries O-linked (GlcNAc) serine glycosylation.

It belongs to the small heat shock protein (HSP20) family. Heteromer composed of three CRYAA and one CRYAB subunits. Inter-subunit bridging via zinc ions enhances stability, which is crucial as there is no protein turn over in the lens. Can also form homodimers and homotetramers (dimers of dimers) which serve as the building blocks of homooligomers. Within homooligomers, the zinc-binding motif is created from residues of 3 different molecules. His-100 and Glu-102 from one molecule are ligands of the zinc ion, and His-107 and His-154 residues from additional molecules complete the site with tetrahedral coordination geometry. Part of a complex required for lens intermediate filament formation composed of BFSP1, BFSP2 and CRYAA. In terms of processing, acetylation at Lys-70 may increase chaperone activity. Undergoes age-dependent proteolytical cleavage at the C-terminus.

The protein resides in the cytoplasm. It is found in the nucleus. Contributes to the transparency and refractive index of the lens. Acts as a chaperone, preventing aggregation of various proteins under a wide range of stress conditions. Required for the correct formation of lens intermediate filaments as part of a complex composed of BFSP1, BFSP2 and CRYAA. This chain is Alpha-crystallin A chain (CRYAA), found in Otolemur crassicaudatus (Brown greater galago).